Here is a 437-residue protein sequence, read N- to C-terminus: F-box protein At3g62430 (437 aa).

The F-box domain maps to 1-49 (MDRISNLPDGVIYRVISLLSTKEATCLKYTSKNWLNLVTIIPIAVFVDS).

In Arabidopsis thaliana (Mouse-ear cress), this protein is F-box protein At3g62430.